The chain runs to 172 residues: uncharacterized protein (172 aa).

Residues 147-159 are compositionally biased toward gly residues; the sequence is AGSGSGSGSGSGS. The interval 147-172 is disordered; sequence AGSGSGSGSGSGSDTGPFKKSQYKIL.

This is an uncharacterized protein from Homo sapiens (Human).